The following is a 428-amino-acid chain: Cytochrome c biogenesis protein CcsB (428 aa).

Helical transmembrane passes span 14 to 34 (LRFA…GTFI), 72 to 92 (SNWF…CSFR), and 162 to 182 (LGPI…AYGN).

This sequence belongs to the Ccs1/CcsB family. May interact with CcsA.

Its subcellular location is the cellular thylakoid membrane. Required during biogenesis of c-type cytochromes (cytochrome c6 and cytochrome f) at the step of heme attachment. The polypeptide is Cytochrome c biogenesis protein CcsB (Prochlorococcus marinus subsp. pastoris (strain CCMP1986 / NIES-2087 / MED4)).